The chain runs to 53 residues: Antitoxin RelB3 (53 aa).

Forms heterodimers with RelE and possibly a heterotetramer RelE3-RelB3(2)-RelE3 from 2 heterodimers. The heterotetramer is probably not very stable in solution.

Antitoxin component of a type II toxin-antitoxin (TA) system. Probably neutralizes the toxic activity of cognate toxin RelE. This chain is Antitoxin RelB3 (relB3), found in Methanocaldococcus jannaschii (strain ATCC 43067 / DSM 2661 / JAL-1 / JCM 10045 / NBRC 100440) (Methanococcus jannaschii).